The sequence spans 116 residues: Large ribosomal subunit protein bL20c (116 aa).

It belongs to the bacterial ribosomal protein bL20 family.

It is found in the plastid. The protein localises to the chloroplast. In terms of biological role, binds directly to 23S ribosomal RNA and is necessary for the in vitro assembly process of the 50S ribosomal subunit. It is not involved in the protein synthesizing functions of that subunit. The protein is Large ribosomal subunit protein bL20c of Cryptomeria japonica (Japanese cedar).